We begin with the raw amino-acid sequence, 173 residues long: MPAPQKDGPRANRDIRGVREVQLIDDTGQNRGVVPFFDALNLAEEVGLDLVEIAPNSVPPVCKLLDYGRFRFNEQKKQNEARKRQKTVEVKEIKLRPGIDKHDYDTKMKSVHRFFEEGDKVKVTLRFRGREMAHQDIGLRLLERVKSETAEIAKVESEPMLEGRQMIMILAPR.

It belongs to the IF-3 family. As to quaternary structure, monomer.

The protein resides in the cytoplasm. Its function is as follows. IF-3 binds to the 30S ribosomal subunit and shifts the equilibrium between 70S ribosomes and their 50S and 30S subunits in favor of the free subunits, thus enhancing the availability of 30S subunits on which protein synthesis initiation begins. The chain is Translation initiation factor IF-3 from Methylobacterium radiotolerans (strain ATCC 27329 / DSM 1819 / JCM 2831 / NBRC 15690 / NCIMB 10815 / 0-1).